An 891-amino-acid polypeptide reads, in one-letter code: Alanine--tRNA ligase (891 aa).

Zn(2+) is bound by residues His-564, His-568, Cys-678, and His-682.

This sequence belongs to the class-II aminoacyl-tRNA synthetase family. Requires Zn(2+) as cofactor.

The protein resides in the cytoplasm. It catalyses the reaction tRNA(Ala) + L-alanine + ATP = L-alanyl-tRNA(Ala) + AMP + diphosphate. Functionally, catalyzes the attachment of alanine to tRNA(Ala) in a two-step reaction: alanine is first activated by ATP to form Ala-AMP and then transferred to the acceptor end of tRNA(Ala). Also edits incorrectly charged Ser-tRNA(Ala) and Gly-tRNA(Ala) via its editing domain. This Nitrobacter winogradskyi (strain ATCC 25391 / DSM 10237 / CIP 104748 / NCIMB 11846 / Nb-255) protein is Alanine--tRNA ligase.